Consider the following 365-residue polypeptide: Probable dual-specificity RNA methyltransferase RlmN (365 aa).

The Proton acceptor role is filled by Glu99. The region spanning Gln105 to Asp344 is the Radical SAM core domain. Cys112 and Cys349 are joined by a disulfide. Residues Cys119, Cys123, and Cys126 each coordinate [4Fe-4S] cluster. Residues Gly171 to Glu172, Ser203, Ser227 to His229, and Asn305 each bind S-adenosyl-L-methionine. Catalysis depends on Cys349, which acts as the S-methylcysteine intermediate.

Belongs to the radical SAM superfamily. RlmN family. [4Fe-4S] cluster serves as cofactor.

It is found in the cytoplasm. The enzyme catalyses adenosine(2503) in 23S rRNA + 2 reduced [2Fe-2S]-[ferredoxin] + 2 S-adenosyl-L-methionine = 2-methyladenosine(2503) in 23S rRNA + 5'-deoxyadenosine + L-methionine + 2 oxidized [2Fe-2S]-[ferredoxin] + S-adenosyl-L-homocysteine. The catalysed reaction is adenosine(37) in tRNA + 2 reduced [2Fe-2S]-[ferredoxin] + 2 S-adenosyl-L-methionine = 2-methyladenosine(37) in tRNA + 5'-deoxyadenosine + L-methionine + 2 oxidized [2Fe-2S]-[ferredoxin] + S-adenosyl-L-homocysteine. Its function is as follows. Specifically methylates position 2 of adenine 2503 in 23S rRNA and position 2 of adenine 37 in tRNAs. This chain is Probable dual-specificity RNA methyltransferase RlmN, found in Lactococcus lactis subsp. cremoris (strain MG1363).